A 40-amino-acid chain; its full sequence is Bacterioferritin heavy chain (40 aa).

The Ferritin-like diiron domain occupies 1-40 (MRGNPEVIDYLNMLIGGELAARDQYLIHSRMYEDWGLTKY). Glu-18 provides a ligand contact to Fe cation.

The protein belongs to the bacterioferritin family. In terms of assembly, oligomer consisting of two types of subunits: light chain and heavy chain.

May perform analogous functions in iron detoxification and storage to that of animal ferritins. Contains approximately 750 iron atoms per molecule. The sequence is that of Bacterioferritin heavy chain from Absidia spinosa.